Consider the following 581-residue polypeptide: Leucine-rich repeat-containing protein 15 (581 aa).

An N-terminal signal peptide occupies residues 1–21; that stretch reads MPLKHYLLLLVGCQAWGAGLA. The region spanning 22-53 is the LRRNT domain; the sequence is YHGCPSECTCSRASQVECTGARIVAVPTPLPW. Topologically, residues 22-538 are extracellular; the sequence is YHGCPSECTC…VWGMTQAQSG (517 aa). LRR repeat units follow at residues 54 to 75, 78 to 99, 102 to 123, 126 to 147, 150 to 171, 174 to 195, 198 to 219, 222 to 243, 246 to 267, 270 to 291, 294 to 315, 318 to 339, 342 to 363, 366 to 387, and 390 to 411; these read NAMSLQILNTHITELNESPFLN, ALIALRIEKNELSRITPGAFRN, SLRYLSLANNKLQVLPIGLFQG, SLESLLLSSNQLLQIQPAHFSQ, NLKELQLHGNHLEYIPDGAFDH, GLTKLNLGKNSLTHISPRVFQH, NLQVLRLYENRLTDIPMGTFDG, NLQELALQQNQIGLLSPGLFHN, NLQRLYLSNNHISQLPPSVFMQ, QLNRLTLFGNSLKELSPGIFGP, NLRELWLYDNHISSLPDNVFSN, QLQVLILSRNQISFISPGAFNG, ELRELSLHTNALQDLDGNVFRM, NLQNISLQNNRLRQLPGNIFAN, and GLMAIQLQNNQLENLPLGIFDH. N-linked (GlcNAc...) asparagine glycosylation occurs at Asn-75. Residue Asn-369 is glycosylated (N-linked (GlcNAc...) asparagine). One can recognise an LRRCT domain in the interval 423–475; that stretch reads NPWRCDSDILPLRNWLLLNQPRLGTDTVPVCFSPANVRGQSLIIINVNVAVPS. Positions 489–509 are disordered; the sequence is WYPDTPSYPDTTSVSSTTELT. The segment covering 499–509 has biased composition (low complexity); that stretch reads TTSVSSTTELT. The helical transmembrane segment at 539–559 threads the bilayer; the sequence is LAIAAIVIGIVALACSLAACV. The Cytoplasmic segment spans residues 560–581; that stretch reads GCCCCKKRSQAVLMQMKAPNEC.

In terms of assembly, (Microbial infection) Interacts with human coronavirus SARS-CoV-2 spike protein (via RBD domain); the interaction is direct and sequesters virions at the cell surface. (Microbial infection) Interacts with human coronavirus SARS-CoV-2 spike protein (via RBD domain); the interaction is direct. Expressed in brain and placenta. Expressed in lung fibroblasts. Expressed in chodrocytes.

The protein resides in the cell membrane. Its function is as follows. (Microbial infection) Modulates the ability of SARS-CoV-2 to infect host cells through interaction with the spike protein. Does not act as a SARS-CoV-2 entry receptor but sequesters virions and antagonizes in trans SARS-CoV-2 infection of ACE2(+) cells when expressed on nearby cells. The polypeptide is Leucine-rich repeat-containing protein 15 (LRRC15) (Homo sapiens (Human)).